A 144-amino-acid chain; its full sequence is MRQTTIIRHKETDKKWFVVDAEGQVLGRLASVVASYLRGKNKPTFTPNVDMGDNIIVINADKVVLTAKKEDDKIYYSSSGYNGGLKAINARDLRAKKPFALVEKAVKGMIPHTKLGRKQFGNLYVYAGREHNHEAQKPEVLEVK.

This sequence belongs to the universal ribosomal protein uL13 family. Part of the 50S ribosomal subunit.

In terms of biological role, this protein is one of the early assembly proteins of the 50S ribosomal subunit, although it is not seen to bind rRNA by itself. It is important during the early stages of 50S assembly. The polypeptide is Large ribosomal subunit protein uL13 (Mycoplasma mobile (strain ATCC 43663 / 163K / NCTC 11711) (Mesomycoplasma mobile)).